A 147-amino-acid polypeptide reads, in one-letter code: Formiminotransferase N-terminal subdomain-containing protein (147 aa).

Residues 1–20 (MSSSRVGLRLAACLLNVSEA) form the signal peptide.

The protein belongs to the formiminotransferase family. Widely expressed with highest levels in liver and skeletal muscle, and moderate levels in kidney, bone and pancreas.

In Homo sapiens (Human), this protein is Formiminotransferase N-terminal subdomain-containing protein (FTCDNL1).